A 248-amino-acid chain; its full sequence is Cytochrome c oxidase subunit 2 (248 aa).

Residues 1-12 form the signal peptide; the sequence is MLLMNLFTIINN. The Mitochondrial intermembrane segment spans residues 13 to 39; that stretch reads DVPTPYNMYFQDSTTPHQEGILELHDN. The chain crosses the membrane as a helical span at residues 40-61; the sequence is IMFYMLTVLGLVSWMMIIIIKD. Residues 62-79 lie on the Mitochondrial matrix side of the membrane; it reads YKNNPITYKYIKHGQMIE. The chain crosses the membrane as a helical span at residues 80–104; sequence IIWTILPAIILLMIAFPSFILLYLC. At 105-248 the chain is on the mitochondrial intermembrane side; the sequence is DEVISPAMTI…PTFLTWLNEQ (144 aa). Residues histidine 183, cysteine 218, glutamate 220, cysteine 222, histidine 226, and methionine 229 each coordinate Cu cation. Glutamate 220 lines the Mg(2+) pocket.

The protein belongs to the cytochrome c oxidase subunit 2 family. In terms of assembly, component of the cytochrome c oxidase (complex IV, CIV), a multisubunit enzyme composed of a catalytic core of 3 subunits and several supernumerary subunits. The complex exists as a monomer or a dimer and forms supercomplexes (SCs) in the inner mitochondrial membrane with ubiquinol-cytochrome c oxidoreductase (cytochrome b-c1 complex, complex III, CIII). Requires Cu cation as cofactor. In terms of processing, the signal sequence of COX2 is processed by IMP1.

It is found in the mitochondrion inner membrane. The enzyme catalyses 4 Fe(II)-[cytochrome c] + O2 + 8 H(+)(in) = 4 Fe(III)-[cytochrome c] + 2 H2O + 4 H(+)(out). Its function is as follows. Component of the cytochrome c oxidase, the last enzyme in the mitochondrial electron transport chain which drives oxidative phosphorylation. The respiratory chain contains 3 multisubunit complexes succinate dehydrogenase (complex II, CII), ubiquinol-cytochrome c oxidoreductase (cytochrome b-c1 complex, complex III, CIII) and cytochrome c oxidase (complex IV, CIV), that cooperate to transfer electrons derived from NADH and succinate to molecular oxygen, creating an electrochemical gradient over the inner membrane that drives transmembrane transport and the ATP synthase. Cytochrome c oxidase is the component of the respiratory chain that catalyzes the reduction of oxygen to water. Electrons originating from reduced cytochrome c in the intermembrane space (IMS) are transferred via the dinuclear copper A center (CU(A)) of subunit 2 and heme A of subunit 1 to the active site in subunit 1, a binuclear center (BNC) formed by heme A3 and copper B (CU(B)). The BNC reduces molecular oxygen to 2 water molecules using 4 electrons from cytochrome c in the IMS and 4 protons from the mitochondrial matrix. The protein is Cytochrome c oxidase subunit 2 (COX2) of Eremothecium gossypii (strain ATCC 10895 / CBS 109.51 / FGSC 9923 / NRRL Y-1056) (Yeast).